The chain runs to 509 residues: Maturase K (509 aa).

This sequence belongs to the intron maturase 2 family. MatK subfamily.

It localises to the plastid. Its subcellular location is the chloroplast. Usually encoded in the trnK tRNA gene intron. Probably assists in splicing its own and other chloroplast group II introns. The protein is Maturase K of Solanum bulbocastanum (Wild potato).